A 64-amino-acid polypeptide reads, in one-letter code: Bacteriocin glycocin F (64 aa).

The first 21 residues, 1–21 (MSKLVKTLTISEISKAQNNGG), serve as a signal peptide directing secretion. Disulfide bonds link C26-C49 and C33-C42. Residue S39 is glycosylated (O-linked (GlcNAc) serine). A glycan (S-linked (GlcNAc) cysteine) is linked at C64.

It localises to the secreted. Its function is as follows. Has antibacterial activity against L.plantarum ATCC 8014. In purified form, the activity is bacteriostatic (IC(50)=2 nM) rather than bactericidal. In Lactiplantibacillus plantarum (Lactobacillus plantarum), this protein is Bacteriocin glycocin F.